A 172-amino-acid chain; its full sequence is Macro domain-containing protein lp_3408 (172 aa).

The Macro domain maps to 1-171; the sequence is MVEIKVIHGD…VFSTALAALT (171 aa).

This sequence belongs to the MacroD-type family.

The chain is Macro domain-containing protein lp_3408 from Lactiplantibacillus plantarum (strain ATCC BAA-793 / NCIMB 8826 / WCFS1) (Lactobacillus plantarum).